The following is a 91-amino-acid chain: Potassium channel toxin AaTXK-beta (91 aa).

A signal peptide spans 1–19 (MQRNLVVLLFLGMVALSSC). Positions 20–27 (GLREKHVQ) are excised as a propeptide. A BetaSPN-type CS-alpha/beta domain is found at 54–91 (QFGCPAYQGYCDDHCQDIKKEEGFCHGFKCKCGIPMGF). Cystine bridges form between cysteine 57-cysteine 78, cysteine 64-cysteine 83, and cysteine 68-cysteine 85.

It belongs to the long chain scorpion toxin family. Class 1 subfamily. In terms of assembly, monomer (both chains). Expressed by the venom gland.

The protein resides in the secreted. Inhibits voltage-gated potassium channels (Kv). Does not activate Kv7 channels. In terms of biological role, peptide activator of Kv7.4/KCNQ4 channels. Also acts as a subtype-selective activator of channels formed by Kv7.3/KCNQ3, Kv7.2/Kv7.3 (KCNQ2/KCNQ3), Kv7.5/Kv7.3 (KCNQ3/KCNQ5) subunits. This Androctonus australis (Sahara scorpion) protein is Potassium channel toxin AaTXK-beta.